The following is a 131-amino-acid chain: Holo-[acyl-carrier-protein] synthase (131 aa).

Residues Asp8 and Glu63 each coordinate Mg(2+).

Belongs to the P-Pant transferase superfamily. AcpS family. The cofactor is Mg(2+).

It localises to the cytoplasm. It catalyses the reaction apo-[ACP] + CoA = holo-[ACP] + adenosine 3',5'-bisphosphate + H(+). Its function is as follows. Transfers the 4'-phosphopantetheine moiety from coenzyme A to a Ser of acyl-carrier-protein. The polypeptide is Holo-[acyl-carrier-protein] synthase (Shewanella piezotolerans (strain WP3 / JCM 13877)).